Reading from the N-terminus, the 219-residue chain is Histone H1.01 (219 aa).

Low complexity-rich tracts occupy residues methionine 1–alanine 19 and alanine 27–proline 39. Disordered stretches follow at residues methionine 1 to serine 40 and leucine 94 to lysine 219. Serine 2 carries the post-translational modification N-acetylserine. Positions alanine 37–lysine 110 constitute an H15 domain. Composition is skewed to basic residues over residues alanine 119–alanine 134, lysine 142–lysine 159, lysine 167–alanine 185, and lysine 192–lysine 219.

This sequence belongs to the histone H1/H5 family.

It localises to the nucleus. The protein resides in the chromosome. Histones H1 are necessary for the condensation of nucleosome chains into higher-order structures. This Gallus gallus (Chicken) protein is Histone H1.01.